A 229-amino-acid chain; its full sequence is Putative N-acetylmannosamine-6-phosphate 2-epimerase (229 aa).

This sequence belongs to the NanE family.

It carries out the reaction an N-acyl-D-glucosamine 6-phosphate = an N-acyl-D-mannosamine 6-phosphate. The protein operates within amino-sugar metabolism; N-acetylneuraminate degradation; D-fructose 6-phosphate from N-acetylneuraminate: step 3/5. Converts N-acetylmannosamine-6-phosphate (ManNAc-6-P) to N-acetylglucosamine-6-phosphate (GlcNAc-6-P). In Escherichia coli O139:H28 (strain E24377A / ETEC), this protein is Putative N-acetylmannosamine-6-phosphate 2-epimerase.